A 295-amino-acid polypeptide reads, in one-letter code: 4-hydroxy-tetrahydrodipicolinate synthase (295 aa).

A pyruvate-binding site is contributed by Thr-47. The Proton donor/acceptor role is filled by Tyr-135. The active-site Schiff-base intermediate with substrate is the Lys-163. Ile-206 is a binding site for pyruvate.

In terms of assembly, homodimer. In fact, exists in a monomer-dimer equilibrium in solution, shifted in favor of the dimer in presence of the substrate pyruvate; the monomer has significantly reduced activity compared with the dimer.

It localises to the cytoplasm. The enzyme catalyses L-aspartate 4-semialdehyde + pyruvate = (2S,4S)-4-hydroxy-2,3,4,5-tetrahydrodipicolinate + H2O + H(+). Its pathway is amino-acid biosynthesis; L-lysine biosynthesis via DAP pathway; (S)-tetrahydrodipicolinate from L-aspartate: step 3/4. Its activity is regulated as follows. Is insensitive to lysine-feedback inhibition. Shows ASA substrate inhibition. Catalyzes the condensation of (S)-aspartate-beta-semialdehyde [(S)-ASA] and pyruvate to 4-hydroxy-tetrahydrodipicolinate (HTPA). The chain is 4-hydroxy-tetrahydrodipicolinate synthase from Staphylococcus aureus (strain MRSA252).